We begin with the raw amino-acid sequence, 463 residues long: Competence protein ComFA (463 aa).

The Zn(2+) site is built by C60, C63, C84, and C87. The Helicase ATP-binding domain maps to 133–285 (IEAISKKEEL…LNGQLHSVRI (153 aa)). 146-153 (AVCGAGKT) is an ATP binding site. A DEAD box motif is present at residues 233–236 (DEVD). The Helicase C-terminal domain maps to 317 to 463 (AVKRWIEFHV…ELAAKVECTD (147 aa)).

It belongs to the DEAD box helicase family. In terms of assembly, monomer and dimer in solution. Interacts with DprA and ComFC; ComFA-ComFC form rings about 150 Angstroms in diameter with apparent 6-fold symmetry. It depends on Zn(2+) as a cofactor.

It localises to the cytoplasm. Involved in transformation (genetic competence for DNA uptake). Required for DNA uptake but not for DNA binding to cells. DNA uptake is energy dependent, this protein may provide the driving force for DNA uptake. Does not have helicase activity, translocates on single-stranded (ss)DNA in a 5'-3' direction in an ATP-dependent manner, but does not unwind double-stranded (ds)DNA. ATP hydrolysis causes the release of ssDNA from ComFA. A ssDNA-stimulated ATPase; dsDNA does not stimulate ATPase. ATP hydrolysis causes the release of ssDNA from ComFA. Binds ssDNA but only very poorly to dsDNA in the absence of ATP. Binding to ssDNA does not require free DNA ends. This chain is Competence protein ComFA, found in Bacillus subtilis (strain 168).